Here is a 364-residue protein sequence, read N- to C-terminus: Cobalt-precorrin-5B C(1)-methyltransferase (364 aa).

It belongs to the CbiD family.

It catalyses the reaction Co-precorrin-5B + S-adenosyl-L-methionine = Co-precorrin-6A + S-adenosyl-L-homocysteine. Its pathway is cofactor biosynthesis; adenosylcobalamin biosynthesis; cob(II)yrinate a,c-diamide from sirohydrochlorin (anaerobic route): step 6/10. Functionally, catalyzes the methylation of C-1 in cobalt-precorrin-5B to form cobalt-precorrin-6A. This chain is Cobalt-precorrin-5B C(1)-methyltransferase, found in Thermoplasma acidophilum (strain ATCC 25905 / DSM 1728 / JCM 9062 / NBRC 15155 / AMRC-C165).